Reading from the N-terminus, the 164-residue chain is Galectin-3 (164 aa).

In terms of domain architecture, Galectin spans 9–154 (STVDLSEPLK…FSDVLGVTVL (146 aa)). 4 residues coordinate a carbohydrate: H60, R64, N73, and E84.

Homotetramer. Oligomerization is required for carbohydrate binding.

It localises to the secreted. Its subcellular location is the extracellular space. The protein resides in the extracellular matrix. The protein localises to the cell wall. Binds lactose. May play a role in fruiting body formation. The polypeptide is Galectin-3 (Cgl3) (Coprinopsis cinerea (strain Okayama-7 / 130 / ATCC MYA-4618 / FGSC 9003) (Inky cap fungus)).